The sequence spans 85 residues: Conotoxin Lt28.4 (85 aa).

Positions 1–21 (MPKLEMMLLVLLILPLCYIDA) are cleaved as a signal peptide. Residues 22–40 (VGPPPPWNMEDEIIEHWQK) constitute a propeptide that is removed on maturation.

Belongs to the conotoxin D superfamily. Contains 5 disulfide bonds. As to expression, expressed by the venom duct.

The protein localises to the secreted. Functionally, probable neurotoxin. This Conus litteratus (Lettered cone) protein is Conotoxin Lt28.4.